We begin with the raw amino-acid sequence, 201 residues long: Retinol-binding protein 4 (201 aa).

The signal sequence occupies residues 1 to 18; that stretch reads MEWVWALVLLAALGSAQA. 3 cysteine pairs are disulfide-bonded: cysteine 22–cysteine 178, cysteine 88–cysteine 192, and cysteine 138–cysteine 147. Position 116 (glutamine 116) interacts with substrate. Omega-N-methylarginine is present on arginine 139.

It belongs to the calycin superfamily. Lipocalin family. In terms of assembly, interacts with TTR. Interaction with TTR prevents its loss by filtration through the kidney glomeruli. Interacts with STRA6.

It localises to the secreted. Its function is as follows. Retinol-binding protein that mediates retinol transport in blood plasma. Delivers retinol from the liver stores to the peripheral tissues. Transfers the bound all-trans retinol to STRA6, that then facilitates retinol transport across the cell membrane. The sequence is that of Retinol-binding protein 4 (RBP4) from Sus scrofa (Pig).